Reading from the N-terminus, the 162-residue chain is Peptide deformylase (162 aa).

C91 and H133 together coordinate Fe cation. E134 is an active-site residue. H137 serves as a coordination point for Fe cation.

The protein belongs to the polypeptide deformylase family. It depends on Fe(2+) as a cofactor.

The enzyme catalyses N-terminal N-formyl-L-methionyl-[peptide] + H2O = N-terminal L-methionyl-[peptide] + formate. In terms of biological role, removes the formyl group from the N-terminal Met of newly synthesized proteins. Requires at least a dipeptide for an efficient rate of reaction. N-terminal L-methionine is a prerequisite for activity but the enzyme has broad specificity at other positions. This is Peptide deformylase from Finegoldia magna (strain ATCC 29328 / DSM 20472 / WAL 2508) (Peptostreptococcus magnus).